We begin with the raw amino-acid sequence, 292 residues long: Ribosomal protein L11 methyltransferase (292 aa).

S-adenosyl-L-methionine contacts are provided by T144, G165, D187, and N229.

This sequence belongs to the methyltransferase superfamily. PrmA family.

It localises to the cytoplasm. The catalysed reaction is L-lysyl-[protein] + 3 S-adenosyl-L-methionine = N(6),N(6),N(6)-trimethyl-L-lysyl-[protein] + 3 S-adenosyl-L-homocysteine + 3 H(+). Its function is as follows. Methylates ribosomal protein L11. In Pseudomonas putida (strain GB-1), this protein is Ribosomal protein L11 methyltransferase.